Consider the following 156-residue polypeptide: Ribosomal RNA large subunit methyltransferase H (156 aa).

Residues Gly-104 and 123–128 (LSAMTL) each bind S-adenosyl-L-methionine.

Belongs to the RNA methyltransferase RlmH family. In terms of assembly, homodimer.

It is found in the cytoplasm. The catalysed reaction is pseudouridine(1915) in 23S rRNA + S-adenosyl-L-methionine = N(3)-methylpseudouridine(1915) in 23S rRNA + S-adenosyl-L-homocysteine + H(+). In terms of biological role, specifically methylates the pseudouridine at position 1915 (m3Psi1915) in 23S rRNA. The polypeptide is Ribosomal RNA large subunit methyltransferase H (Chromobacterium violaceum (strain ATCC 12472 / DSM 30191 / JCM 1249 / CCUG 213 / NBRC 12614 / NCIMB 9131 / NCTC 9757 / MK)).